Reading from the N-terminus, the 133-residue chain is MRHYEIVFMVHPDQSEQVNGMIERYTASITEAGGTVHRLEDWGRRQLAYPINKLHKAHYVLMNIEAGQNVIDDLENAFRFNDSVIRNMIMRTKTAVTEVSVVAKAREERVERAPRAPRPEVKAEPEAEATAEA.

Basic and acidic residues predominate over residues 106–125 (REERVERAPRAPRPEVKAEP). The interval 106 to 133 (REERVERAPRAPRPEVKAEPEAEATAEA) is disordered.

It belongs to the bacterial ribosomal protein bS6 family.

Binds together with bS18 to 16S ribosomal RNA. The protein is Small ribosomal subunit protein bS6 of Psychromonas ingrahamii (strain DSM 17664 / CCUG 51855 / 37).